A 402-amino-acid chain; its full sequence is CCA-adding enzyme (402 aa).

Gly32 and Arg35 together coordinate ATP. CTP-binding residues include Gly32 and Arg35. Residues Asp45 and Asp47 each coordinate Mg(2+). 5 residues coordinate ATP: Arg116, Asp159, Arg162, Arg165, and Arg168. 5 residues coordinate CTP: Arg116, Asp159, Arg162, Arg165, and Arg168.

The protein belongs to the tRNA nucleotidyltransferase/poly(A) polymerase family. Bacterial CCA-adding enzyme type 3 subfamily. As to quaternary structure, homodimer. Mg(2+) is required as a cofactor.

The enzyme catalyses a tRNA precursor + 2 CTP + ATP = a tRNA with a 3' CCA end + 3 diphosphate. It catalyses the reaction a tRNA with a 3' CCA end + 2 CTP + ATP = a tRNA with a 3' CCACCA end + 3 diphosphate. In terms of biological role, catalyzes the addition and repair of the essential 3'-terminal CCA sequence in tRNAs without using a nucleic acid template. Adds these three nucleotides in the order of C, C, and A to the tRNA nucleotide-73, using CTP and ATP as substrates and producing inorganic pyrophosphate. tRNA 3'-terminal CCA addition is required both for tRNA processing and repair. Also involved in tRNA surveillance by mediating tandem CCA addition to generate a CCACCA at the 3' terminus of unstable tRNAs. While stable tRNAs receive only 3'-terminal CCA, unstable tRNAs are marked with CCACCA and rapidly degraded. The polypeptide is CCA-adding enzyme (Streptococcus pyogenes serotype M1).